A 261-amino-acid polypeptide reads, in one-letter code: Carnitinyl-CoA dehydratase (261 aa).

Residue Glu-111 is the Nucleophile of the active site. The active-site Proton acceptor is Glu-131.

Belongs to the enoyl-CoA hydratase/isomerase family.

It carries out the reaction (R)-carnitinyl-CoA = crotonobetainyl-CoA + H2O. Its pathway is amine and polyamine metabolism; carnitine metabolism. In terms of biological role, catalyzes the reversible dehydration of L-carnitinyl-CoA to crotonobetainyl-CoA. This Salmonella paratyphi C (strain RKS4594) protein is Carnitinyl-CoA dehydratase.